Reading from the N-terminus, the 95-residue chain is Fluoride-specific ion channel FluC 1 (95 aa).

A run of 3 helical transmembrane segments spans residues 23–43, 49–69, and 70–90; these read LIDA…LMGW, LWGT…LLMF, and DGAY…WLLG. 2 residues coordinate Na(+): G56 and T59.

Belongs to the fluoride channel Fluc/FEX (TC 1.A.43) family.

It localises to the cell membrane. The catalysed reaction is fluoride(in) = fluoride(out). Its activity is regulated as follows. Na(+) is not transported, but it plays an essential structural role and its presence is essential for fluoride channel function. Functionally, fluoride-specific ion channel. Important for reducing fluoride concentration in the cell, thus reducing its toxicity. The sequence is that of Fluoride-specific ion channel FluC 1 from Corynebacterium diphtheriae (strain ATCC 700971 / NCTC 13129 / Biotype gravis).